The sequence spans 429 residues: Mannose-6-phosphate isomerase (429 aa).

Zn(2+) is bound by residues Gln110, His112, Glu137, and His282. Arg301 is a catalytic residue.

This sequence belongs to the mannose-6-phosphate isomerase type 1 family. Requires Zn(2+) as cofactor.

The protein resides in the cytoplasm. The catalysed reaction is D-mannose 6-phosphate = D-fructose 6-phosphate. It participates in nucleotide-sugar biosynthesis; GDP-alpha-D-mannose biosynthesis; alpha-D-mannose 1-phosphate from D-fructose 6-phosphate: step 1/2. Its function is as follows. Involved in the synthesis of the GDP-mannose and dolichol-phosphate-mannose required for a number of critical mannosyl transfer reactions. The sequence is that of Mannose-6-phosphate isomerase (PMI1) from Candida glabrata (strain ATCC 2001 / BCRC 20586 / JCM 3761 / NBRC 0622 / NRRL Y-65 / CBS 138) (Yeast).